We begin with the raw amino-acid sequence, 436 residues long: tRNA-2-methylthio-N(6)-dimethylallyladenosine synthase (436 aa).

One can recognise an MTTase N-terminal domain in the interval 5–121 (RKLFIKTYGC…LPDMLERTEG (117 aa)). [4Fe-4S] cluster-binding residues include Cys-14, Cys-50, Cys-84, Cys-158, Cys-162, and Cys-165. In terms of domain architecture, Radical SAM core spans 144–373 (ALRGPTAFLT…LGEQQRAAQA (230 aa)). In terms of domain architecture, TRAM spans 373–435 (AAMVGRELGV…PNSLAGERIG (63 aa)).

It belongs to the methylthiotransferase family. MiaB subfamily. As to quaternary structure, monomer. The cofactor is [4Fe-4S] cluster.

The protein localises to the cytoplasm. It catalyses the reaction N(6)-dimethylallyladenosine(37) in tRNA + (sulfur carrier)-SH + AH2 + 2 S-adenosyl-L-methionine = 2-methylsulfanyl-N(6)-dimethylallyladenosine(37) in tRNA + (sulfur carrier)-H + 5'-deoxyadenosine + L-methionine + A + S-adenosyl-L-homocysteine + 2 H(+). In terms of biological role, catalyzes the methylthiolation of N6-(dimethylallyl)adenosine (i(6)A), leading to the formation of 2-methylthio-N6-(dimethylallyl)adenosine (ms(2)i(6)A) at position 37 in tRNAs that read codons beginning with uridine. In Cereibacter sphaeroides (strain ATCC 17025 / ATH 2.4.3) (Rhodobacter sphaeroides), this protein is tRNA-2-methylthio-N(6)-dimethylallyladenosine synthase.